Here is a 570-residue protein sequence, read N- to C-terminus: 4-coumarate--CoA ligase 4 (570 aa).

Positions 218, 219, 220, 221, 222, and 226 each coordinate ATP. Tyr268 contacts (E)-4-coumaroyl-AMP. Arg289 provides a ligand contact to CoA. Residues 291 to 360 form an SBD1 region; sequence ELNLVMELIQ…LKFPNAIFGQ (70 aa). Ala338, Gln360, Gly361, and Thr365 together coordinate (E)-4-coumaroyl-AMP. The ATP site is built by Gln360, Gly361, Thr365, Asp448, and Arg463. The interval 361–427 is SBD2; it reads GYGMTESGTV…VRGHQLMKGY (67 aa). (E)-4-coumaroyl-AMP-binding residues include Lys465 and Lys469. 2 residues coordinate CoA: Lys471 and Gly472. Lys554 is an ATP binding site.

This sequence belongs to the ATP-dependent AMP-binding enzyme family. Mg(2+) serves as cofactor.

The enzyme catalyses (E)-sinapate + ATP + CoA = (E)-sinapoyl-CoA + AMP + diphosphate. The catalysed reaction is (E)-4-coumarate + ATP + CoA = (E)-4-coumaroyl-CoA + AMP + diphosphate. It carries out the reaction (E)-caffeate + ATP + CoA = (E)-caffeoyl-CoA + AMP + diphosphate. It catalyses the reaction (E)-ferulate + ATP + CoA = (E)-feruloyl-CoA + AMP + diphosphate. The enzyme catalyses (E)-sinapate + ATP + H(+) = (E)-sinapoyl-AMP + diphosphate. The catalysed reaction is (E)-sinapoyl-AMP + CoA = (E)-sinapoyl-CoA + AMP + H(+). It carries out the reaction (E)-4-coumarate + ATP + H(+) = (E)-4-coumaroyl-AMP + diphosphate. It catalyses the reaction (E)-4-coumaroyl-AMP + CoA = (E)-4-coumaroyl-CoA + AMP + H(+). The enzyme catalyses (E)-caffeate + ATP + H(+) = (E)-caffeoyl-AMP + diphosphate. The catalysed reaction is (E)-caffeoyl-AMP + CoA = (E)-caffeoyl-CoA + AMP + H(+). It carries out the reaction (E)-ferulate + ATP + H(+) = (E)-feruloyl-AMP + diphosphate. It catalyses the reaction (E)-feruloyl-AMP + CoA = (E)-feruloyl-CoA + AMP + H(+). Its pathway is phytoalexin biosynthesis; 3,4',5-trihydroxystilbene biosynthesis; 3,4',5-trihydroxystilbene from trans-4-coumarate: step 1/2. Produces CoA thioesters of a variety of hydroxy- and methoxy-substituted cinnamic acids, which are used to synthesize several phenylpropanoid-derived compounds, including anthocyanins, flavonoids, isoflavonoids, coumarins, lignin, suberin and wall-bound phenolics. Follows a two-step reaction mechanism, wherein the carboxylate substrate first undergoes adenylation by ATP, followed by a thioesterification in the presence of CoA to yield the final CoA thioesters. This is 4-coumarate--CoA ligase 4 from Arabidopsis thaliana (Mouse-ear cress).